The chain runs to 524 residues: Protopine 6-monooxygenase (524 aa).

3 helical membrane-spanning segments follow: residues 4–24 (LMLA…VFLY), 232–252 (LASL…DIFQ), and 319–339 (MIMG…SLLM). Cys-462 is a heme binding site.

It belongs to the cytochrome P450 family. Heme is required as a cofactor.

The protein localises to the endoplasmic reticulum membrane. The catalysed reaction is protopine + reduced [NADPH--hemoprotein reductase] + O2 = 6-hydroxyprotopine + oxidized [NADPH--hemoprotein reductase] + H2O + H(+). It functions in the pathway alkaloid biosynthesis. Catalyzes the conversion of protopine and allocryptopine to dihydrosanguinarine and dihydrochelerythrine, respectively, in the biosynthesis of isoquinoline alkaloid sanguinarine. The protein is Protopine 6-monooxygenase (CYP82N2v2) of Eschscholzia californica (California poppy).